We begin with the raw amino-acid sequence, 417 residues long: MAAIINQRVDQGESSMGGAKPTLLHKIAGHVARINDVILLSKDEGVWTASDDRSVRLYLKRDNDQFWPSIHHFMPVAPTCLFYSEETYKLLVGLINGNVYEFNVADDFNSMTESRKWTCHAGPISGLGFALSSELIFSCSRDKSIVWHCSENSNKVGSYLLENSCTAMVIDLPFVFVGDHGGHVTVLRIIDNQPNLVSKLSAHTNSITSLTWDGNKKVLYSGSSDHLIIMWDIGGGKGEAYELNGHNGKVTTLCAAPAAKRLFSADEHGKLMCWDMDVRRVETPEWKTSDCCQKCNQPFFWNLQAMWQRKVVGLRQHHCRTCGSAVCGSCCDNWTTYPPMGYETKVRICNDCAGRMKENPGNFDLTPLAIPHEIRTGITAMHLQETLGLLVTSGQNRVVMIWDVRSVCSAPSGSGGH.

WD repeat units lie at residues 29–68, 119–157, 202–241, and 245–284; these read GHVA…QFWP, CHAG…NKVG, AHTN…GEAY, and GHNG…VETP. The segment at 286–357 adopts an FYVE-type zinc-finger fold; sequence WKTSDCCQKC…ICNDCAGRMK (72 aa). Positions 292, 295, 319, 322, 327, 330, 349, and 352 each coordinate Zn(2+). Residues 373–412 form a WD 5 repeat; that stretch reads EIRTGITAMHLQETLGLLVTSGQNRVVMIWDVRSVCSAPS.

Functionally, plays a role in coelomocyte endocytosis. This is WD repeat and FYVE domain-containing protein 2 from Caenorhabditis briggsae.